The following is an 880-amino-acid chain: Interference hedgehog (880 aa).

A signal peptide spans 1–20 (MPSIVSSLLLVVLLTSPLGA). The Extracellular segment spans residues 21–703 (IPVLYPSPPP…SHNETFSMSP (683 aa)). Ig-like C2-type domains follow at residues 37-142 (PGVR…TARL), 154-235 (PVTS…STSS), 251-339 (PYLL…FIQV), and 345-432 (PQIV…LQVT). 4 disulfides stabilise this stretch: C60-C126, C172-C219, C275-C323, and C366-C414. N-linked (GlcNAc...) asparagine glycosylation is found at N79, N102, and N208. Residues 435-468 (PIHSESTQQSDHNHSKANRGRRPAQMIPPSAPNV) form a disordered region. N-linked (GlcNAc...) asparagine glycans are attached at residues N447 and N467. 2 consecutive Fibronectin type-III domains span residues 462–570 (PPSA…LQPG) and 578–673 (VPEM…TQRP). Residues R498, K504, K506, and R544 each coordinate heparin. A glycan (N-linked (GlcNAc...) asparagine) is linked at N560. The disordered stretch occupies residues 665–699 (LKQGRTQRPMVSTTEEATLQTGVRDTTTPSHNETF). A compositionally biased stretch (polar residues) spans 668–699 (GRTQRPMVSTTEEATLQTGVRDTTTPSHNETF). An N-linked (GlcNAc...) asparagine glycan is attached at N696. A helical membrane pass occupies residues 704 to 724 (IVTGTIGGGAVLILFVVTTCL). Over 725-880 (CMWRRRNSRA…SSGSLNSVGV (156 aa)) the chain is Cytoplasmic. The disordered stretch occupies residues 797-880 (YFQRQPTYDY…SSGSLNSVGV (84 aa)). 2 stretches are compositionally biased toward low complexity: residues 827-839 (RAGS…NNLN) and 864-880 (SSRS…SVGV).

It belongs to the immunoglobulin superfamily. IHOG family. Homodimer. Heterotetramer; 2 iHog chains bind 2 hh chains when facilitated by heparin, heparin is required to promote high-affinity interactions between hh and iHog.

The protein resides in the membrane. Mediates response to the active Hedgehog (Hh) protein signal in embryos, functioning upstream or at the level of patched (ptc). This Drosophila ananassae (Fruit fly) protein is Interference hedgehog.